Consider the following 159-residue polypeptide: S-ribosylhomocysteine lyase (159 aa).

3 residues coordinate Fe cation: His53, His57, and Cys124.

It belongs to the LuxS family. Homodimer. Fe cation is required as a cofactor.

It catalyses the reaction S-(5-deoxy-D-ribos-5-yl)-L-homocysteine = (S)-4,5-dihydroxypentane-2,3-dione + L-homocysteine. Its function is as follows. Involved in the synthesis of autoinducer 2 (AI-2) which is secreted by bacteria and is used to communicate both the cell density and the metabolic potential of the environment. The regulation of gene expression in response to changes in cell density is called quorum sensing. Catalyzes the transformation of S-ribosylhomocysteine (RHC) to homocysteine (HC) and 4,5-dihydroxy-2,3-pentadione (DPD). This is S-ribosylhomocysteine lyase from Porphyromonas gingivalis (strain ATCC BAA-308 / W83).